The primary structure comprises 530 residues: Anthranilate synthase component 1, pyocyanine specific (530 aa).

Residue 331 to 332 participates in substrate binding; that stretch reads GT. Position 364 (glutamate 364) interacts with Mg(2+). Substrate contacts are provided by residues tyrosine 452, arginine 472, 486–488, and glycine 488; that span reads GAG. Glutamate 501 is a Mg(2+) binding site.

The protein belongs to the anthranilate synthase component I family. In terms of assembly, heterotetramer consisting of two non-identical subunits: a beta subunit (PhnB) and a large alpha subunit (PhnA). The cofactor is Mg(2+).

The enzyme catalyses chorismate + L-glutamine = anthranilate + pyruvate + L-glutamate + H(+). The protein operates within secondary metabolite biosynthesis; pyocyanine biosynthesis. In terms of biological role, part of a heterotetrameric complex that catalyzes the two-step biosynthesis of anthranilate, a precursor for Pseudomonas quinolone signal (2-heptyl-3-hydroxy-4-quinolone; PQS) production which is required to induce the genes for the biosynthesis of the virulence factor pyocyanine (PCN), a characteristic blue-green phenazine pigment produced by P.aeruginosa. In the first step, the glutamine-binding beta subunit (PhnB) of anthranilate synthase (AS) provides the glutamine amidotransferase activity which generates ammonia as a substrate that, along with chorismate, is used in the second step, catalyzed by the large alpha subunit of AS (PhnA) to produce anthranilate. The sequence is that of Anthranilate synthase component 1, pyocyanine specific from Pseudomonas aeruginosa (strain ATCC 15692 / DSM 22644 / CIP 104116 / JCM 14847 / LMG 12228 / 1C / PRS 101 / PAO1).